A 147-amino-acid chain; its full sequence is Flagellar assembly factor FliW (147 aa).

Belongs to the FliW family. In terms of assembly, interacts with translational regulator CsrA and flagellin(s).

It localises to the cytoplasm. Functionally, acts as an anti-CsrA protein, binds CsrA and prevents it from repressing translation of its target genes, one of which is flagellin. Binds to flagellin and participates in the assembly of the flagellum. This chain is Flagellar assembly factor FliW, found in Treponema denticola (strain ATCC 35405 / DSM 14222 / CIP 103919 / JCM 8153 / KCTC 15104).